Consider the following 499-residue polypeptide: Alpha-amylase B (499 aa).

A signal peptide spans 1–21 (MMVAWWSLFLYGLQVAAPALA). The cysteines at positions 51 and 59 are disulfide-linked. Positions 56 and 104 each coordinate substrate. Asn-142 is a binding site for Ca(2+). His-143 provides a ligand contact to substrate. Cys-171 and Cys-185 form a disulfide bridge. Glu-183 and Asp-196 together coordinate Ca(2+). Asn-218 carries N-linked (GlcNAc...) asparagine glycosylation. Arg-225 contacts substrate. The Ca(2+) site is built by Asp-227, His-231, and Glu-251. Asp-227 functions as the Nucleophile in the catalytic mechanism. 230–231 (KH) contributes to the substrate binding site. Residue Glu-251 is the Proton donor of the active site. Gly-255 is a substrate binding site. Cys-261 and Cys-304 are disulfide-bonded. 2 residues coordinate substrate: Asp-318 and Arg-365. An intrachain disulfide couples Cys-461 to Cys-496.

The protein belongs to the glycosyl hydrolase 13 family. Ca(2+) serves as cofactor.

The catalysed reaction is Endohydrolysis of (1-&gt;4)-alpha-D-glucosidic linkages in polysaccharides containing three or more (1-&gt;4)-alpha-linked D-glucose units.. The polypeptide is Alpha-amylase B (amyB) (Aspergillus awamori (Black koji mold)).